Consider the following 347-residue polypeptide: Protein RecA (347 aa).

ATP is bound at residue 67–74; sequence GPESSGKT.

Belongs to the RecA family.

It localises to the cytoplasm. Its function is as follows. Can catalyze the hydrolysis of ATP in the presence of single-stranded DNA, the ATP-dependent uptake of single-stranded DNA by duplex DNA, and the ATP-dependent hybridization of homologous single-stranded DNAs. It interacts with LexA causing its activation and leading to its autocatalytic cleavage. The protein is Protein RecA of Helicobacter pylori (strain HPAG1).